A 51-amino-acid polypeptide reads, in one-letter code: Large ribosomal subunit protein bL33 (51 aa).

The protein belongs to the bacterial ribosomal protein bL33 family.

This chain is Large ribosomal subunit protein bL33, found in Psychrobacter arcticus (strain DSM 17307 / VKM B-2377 / 273-4).